The following is a 517-amino-acid chain: Crotonobetaine/carnitine--CoA ligase (517 aa).

It belongs to the ATP-dependent AMP-binding enzyme family.

It catalyses the reaction 4-(trimethylamino)butanoate + ATP + CoA = 4-(trimethylamino)butanoyl-CoA + AMP + diphosphate. It carries out the reaction crotonobetaine + ATP + CoA = crotonobetainyl-CoA + AMP + diphosphate. The enzyme catalyses (R)-carnitine + ATP + CoA = (R)-carnitinyl-CoA + AMP + diphosphate. It participates in amine and polyamine metabolism; carnitine metabolism. Its function is as follows. Catalyzes the transfer of CoA to carnitine, generating the initial carnitinyl-CoA needed for the CaiB reaction cycle. Also has activity toward crotonobetaine and gamma-butyrobetaine. The polypeptide is Crotonobetaine/carnitine--CoA ligase (Escherichia fergusonii (strain ATCC 35469 / DSM 13698 / CCUG 18766 / IAM 14443 / JCM 21226 / LMG 7866 / NBRC 102419 / NCTC 12128 / CDC 0568-73)).